An 860-amino-acid chain; its full sequence is Protein argonaute-2 (860 aa).

Tyr2 carries the 3'-nitrotyrosine modification. Residues 230 to 349 (PVIEFVCEVL…LPLEVCNIVA (120 aa)) enclose the PAZ domain. The interaction with guide RNA stretch occupies residues 312-317 (YFKDRH). At Ser388 the chain carries Phosphoserine. Positions 518-819 (LVVVILPGKT…VAFRARYHLV (302 aa)) constitute a Piwi domain. An interaction with guide RNA region spans residues 525–567 (GKTPVYAEVKRVGDTVLGMATQCVQMKNVQRTTPQTLSNLCLK). The interval 588 to 591 (FQQP) is interaction with GW182 family members. Asp598 lines the a divalent metal cation pocket. The segment at 651–661 (LIQFYKSTRFK) is interaction with GW182 family members. Position 670 (Asp670) interacts with a divalent metal cation. At Pro701 the chain carries 4-hydroxyproline. Interaction with guide RNA stretches follow at residues 710-711 (KR), 754-762 (HAGIQGTSR), and 791-813 (YVRCTRSVSIPAPAYYAHLVAFR). His808 contributes to the a divalent metal cation binding site. Phosphoserine is present on residues Ser825, Ser829, Ser832, and Ser835.

Belongs to the argonaute family. Ago subfamily. As to quaternary structure, interacts with DICER1 through its Piwi domain and with TARBP2 during assembly of the RNA-induced silencing complex (RISC). Together, DICER1, AGO2 and TARBP2 constitute the trimeric RISC loading complex (RLC), or micro-RNA (miRNA) loading complex (miRLC). Within the RLC/miRLC, DICER1 and TARBP2 are required to process precursor miRNAs (pre-miRNAs) to mature miRNAs and then load them onto AGO2. AGO2 bound to the mature miRNA constitutes the minimal RISC and may subsequently dissociate from DICER1 and TARBP2. Note however that the term RISC has also been used to describe the trimeric RLC/miRLC. The formation of RISC complexes containing siRNAs rather than miRNAs appears to occur independently of DICER1. Interacts with AGO1. Also interacts with DDB1, DDX5, DDX6, DDX20, DHX30, DHX36, DDX47, DHX9, ELAVL, FXR1, GEMIN4, HNRNPF, IGF2BP1, ILF3, IMP8, MATR3, PABPC1, PRMT5, P4HA1, P4HB, RBM4, SART3, TNRC6A, TNRC6B, UPF1 and YBX1. Interacts with the P-body components DCP1A and XRN1. Associates with polysomes and messenger ribonucleoproteins (mNRPs). Interacts with RBM4; the interaction is modulated under stress-induced conditions, occurs under both cell proliferation and differentiation conditions and in an RNA- and phosphorylation-independent manner. Interacts with LIMD1, WTIP and AJUBA. Interacts with TRIM71; the interaction increases in presence of RNA. Interacts with APOBEC3G in an RNA-dependent manner. Interacts with APOBEC3A, APOBEC3C, APOBEC3F and APOBEC3H. Interacts with DICER1, TARBP2, EIF6, MOV10 and RPL7A (60S ribosome subunit); they form a large RNA-induced silencing complex (RISC). Interacts with FMR1. Interacts with ZFP36. Interacts with RC3H1; the interaction is RNA independent. Found in a complex, composed of AGO2, CHD7 and ARB2A. Interacts with SND1 and SYT11. Interacts with CLNK. Interacts with GARRE1. Interacts with GRB2; this interaction is important for the formation of a ternary complex containing GRB2, AGO2 and DICER1. The cofactor is Mg(2+). Mn(2+) is required as a cofactor. Hydroxylated. 4-hydroxylation appears to enhance protein stability but is not required for miRNA-binding or endonuclease activity. Post-translationally, ubiquitinated on surface-exposed lysines by a SCF-like E3 ubiquitin-protein ligase complex containing ZSWIM8 during target-directed microRNA degradation (TDMD), a process that mediates degradation of microRNAs (miRNAs). Ubiquitination by the SCF-like E3 ubiquitin-protein ligase complex containing ZSWIM8 leads to its subsequent degradation, thereby exposing miRNAs for degradation. ZSWIM8 recognizes and binds AGO2 when it is engaged with a TDMD target. In terms of processing, phosphorylation at Ser-388 by AKT3; leads to up-regulate translational repression of microRNA target and down-regulate endonucleolytic cleavage. A phosphorylation cycle of C-terminal serine cluster (Ser-825-Ser-835) regulates the release of target mRNAs. Target-binding leads to phosphorylation of these residues by CSNK1A1, which reduces the affinity of AGO2 for mRNA and enables target release. The ANKRD52-PPP6C phosphatase complex dephosphorylates the residues, which primes AGO2 for binding a new target.

Its subcellular location is the cytoplasm. The protein localises to the P-body. It localises to the nucleus. It catalyses the reaction Endonucleolytic cleavage to 5'-phosphomonoester.. Its function is as follows. Required for RNA-mediated gene silencing (RNAi) by the RNA-induced silencing complex (RISC). The 'minimal RISC' appears to include AGO2 bound to a short guide RNA such as a microRNA (miRNA) or short interfering RNA (siRNA). These guide RNAs direct RISC to complementary mRNAs that are targets for RISC-mediated gene silencing. The precise mechanism of gene silencing depends on the degree of complementarity between the miRNA or siRNA and its target. Binding of RISC to a perfectly complementary mRNA generally results in silencing due to endonucleolytic cleavage of the mRNA specifically by AGO2. Binding of RISC to a partially complementary mRNA results in silencing through inhibition of translation, and this is independent of endonuclease activity. May inhibit translation initiation by binding to the 7-methylguanosine cap, thereby preventing the recruitment of the translation initiation factor eIF4-E. May also inhibit translation initiation via interaction with EIF6, which itself binds to the 60S ribosomal subunit and prevents its association with the 40S ribosomal subunit. The inhibition of translational initiation leads to the accumulation of the affected mRNA in cytoplasmic processing bodies (P-bodies), where mRNA degradation may subsequently occur. In some cases RISC-mediated translational repression is also observed for miRNAs that perfectly match the 3' untranslated region (3'-UTR). Can also up-regulate the translation of specific mRNAs under certain growth conditions. Binds to the AU element of the 3'-UTR of the TNF (TNF-alpha) mRNA and up-regulates translation under conditions of serum starvation. Also required for transcriptional gene silencing (TGS), in which short RNAs known as antigene RNAs or agRNAs direct the transcriptional repression of complementary promoter regions. The chain is Protein argonaute-2 (Ago2) from Rattus norvegicus (Rat).